The chain runs to 545 residues: CTP synthase (545 aa).

The segment at 1–266 (MTTNYIFVTG…DDYICKRFSL (266 aa)) is amidoligase domain. Ser14 serves as a coordination point for CTP. Ser14 provides a ligand contact to UTP. ATP contacts are provided by residues 15 to 20 (SLGKGI) and Asp72. Residues Asp72 and Glu140 each coordinate Mg(2+). Residues 147–149 (DIE), 187–192 (KTKPTQ), and Lys223 each bind CTP. UTP is bound by residues 187 to 192 (KTKPTQ) and Lys223. 239 to 241 (KDV) serves as a coordination point for ATP. In terms of domain architecture, Glutamine amidotransferase type-1 spans 291 to 542 (TIGMVGKYIE…VKAASEFQKR (252 aa)). Gly352 serves as a coordination point for L-glutamine. Cys379 functions as the Nucleophile; for glutamine hydrolysis in the catalytic mechanism. L-glutamine is bound by residues 380-383 (LGMQ), Glu403, and Arg470. Catalysis depends on residues His515 and Glu517.

Belongs to the CTP synthase family. In terms of assembly, homotetramer.

The catalysed reaction is UTP + L-glutamine + ATP + H2O = CTP + L-glutamate + ADP + phosphate + 2 H(+). It carries out the reaction L-glutamine + H2O = L-glutamate + NH4(+). The enzyme catalyses UTP + NH4(+) + ATP = CTP + ADP + phosphate + 2 H(+). It participates in pyrimidine metabolism; CTP biosynthesis via de novo pathway; CTP from UDP: step 2/2. Its activity is regulated as follows. Allosterically activated by GTP, when glutamine is the substrate; GTP has no effect on the reaction when ammonia is the substrate. The allosteric effector GTP functions by stabilizing the protein conformation that binds the tetrahedral intermediate(s) formed during glutamine hydrolysis. Inhibited by the product CTP, via allosteric rather than competitive inhibition. In terms of biological role, catalyzes the ATP-dependent amination of UTP to CTP with either L-glutamine or ammonia as the source of nitrogen. Regulates intracellular CTP levels through interactions with the four ribonucleotide triphosphates. In Escherichia coli O127:H6 (strain E2348/69 / EPEC), this protein is CTP synthase.